The primary structure comprises 231 residues: Ribonuclease P protein component 3 (231 aa).

The protein belongs to the eukaryotic/archaeal RNase P protein component 3 family. In terms of assembly, consists of a catalytic RNA component and at least 4-5 protein subunits.

Its subcellular location is the cytoplasm. The catalysed reaction is Endonucleolytic cleavage of RNA, removing 5'-extranucleotides from tRNA precursor.. Functionally, part of ribonuclease P, a protein complex that generates mature tRNA molecules by cleaving their 5'-ends. The sequence is that of Ribonuclease P protein component 3 from Methanococcus vannielii (strain ATCC 35089 / DSM 1224 / JCM 13029 / OCM 148 / SB).